Reading from the N-terminus, the 484-residue chain is Cysteine--tRNA ligase (484 aa).

Cys29 contacts Zn(2+). The 'HIGH' region motif lies at Ile31 to His41. Cys215, His240, and Glu244 together coordinate Zn(2+). The 'KMSKS' region motif lies at Lys272–Ser276. Lys275 is a binding site for ATP.

It belongs to the class-I aminoacyl-tRNA synthetase family. In terms of assembly, monomer. It depends on Zn(2+) as a cofactor.

The protein localises to the cytoplasm. The catalysed reaction is tRNA(Cys) + L-cysteine + ATP = L-cysteinyl-tRNA(Cys) + AMP + diphosphate. This Rippkaea orientalis (strain PCC 8801 / RF-1) (Cyanothece sp. (strain PCC 8801)) protein is Cysteine--tRNA ligase.